The sequence spans 443 residues: tRNA(Ile2) 2-agmatinylcytidine synthetase TiaS (443 aa).

Belongs to the TiaS family.

The protein resides in the cytoplasm. The enzyme catalyses cytidine(34) in tRNA(Ile2) + agmatine + ATP + H2O = 2-agmatinylcytidine(34) in tRNA(Ile2) + AMP + 2 phosphate + 2 H(+). Its function is as follows. ATP-dependent agmatine transferase that catalyzes the formation of 2-agmatinylcytidine (agm2C) at the wobble position (C34) of tRNA(Ile2), converting the codon specificity from AUG to AUA. The chain is tRNA(Ile2) 2-agmatinylcytidine synthetase TiaS from Saccharolobus islandicus (strain L.S.2.15 / Lassen #1) (Sulfolobus islandicus).